The chain runs to 378 residues: Deoxyhypusine synthase (378 aa).

NAD(+) contacts are provided by residues 107–111, 133–135, Glu139, and Asp253; these read SNLIS and SAG. Spermidine is bound at residue 138–139; sequence EE. Asp258 contributes to the spermidine binding site. Gly300 is an NAD(+) binding site. His305 is a binding site for spermidine. 325-326 serves as a coordination point for NAD(+); the sequence is TG. Spermidine is bound by residues 331 to 333 and 340 to 346; these read GSD and EAISWGK. The active-site Nucleophile is Lys346. Residue 359 to 360 coordinates NAD(+); the sequence is DA.

Belongs to the deoxyhypusine synthase family. Requires NAD(+) as cofactor.

The catalysed reaction is [eIF5A protein]-L-lysine + spermidine = [eIF5A protein]-deoxyhypusine + propane-1,3-diamine. It functions in the pathway protein modification; eIF5A hypusination. Catalyzes the NAD-dependent oxidative cleavage of spermidine and the subsequent transfer of the butylamine moiety of spermidine to the epsilon-amino group of a specific lysine residue of the eIF-5A precursor protein to form the intermediate deoxyhypusine residue. This chain is Deoxyhypusine synthase (DYS1), found in Debaryomyces hansenii (strain ATCC 36239 / CBS 767 / BCRC 21394 / JCM 1990 / NBRC 0083 / IGC 2968) (Yeast).